The following is a 311-amino-acid chain: Coproporphyrin III ferrochelatase 1 (311 aa).

Fe-coproporphyrin III is bound by residues Tyr-12, Arg-29, 45–46 (RY), Ser-53, and Tyr-124. Positions 182 and 263 each coordinate Fe(2+).

Belongs to the ferrochelatase family.

It is found in the cytoplasm. It carries out the reaction Fe-coproporphyrin III + 2 H(+) = coproporphyrin III + Fe(2+). The protein operates within porphyrin-containing compound metabolism; protoheme biosynthesis. Involved in coproporphyrin-dependent heme b biosynthesis. Catalyzes the insertion of ferrous iron into coproporphyrin III to form Fe-coproporphyrin III. The chain is Coproporphyrin III ferrochelatase 1 from Bacillus cereus (strain ATCC 10987 / NRS 248).